A 265-amino-acid polypeptide reads, in one-letter code: Type III pantothenate kinase (265 aa).

6-13 contacts ATP; the sequence is DVGNTNIV. 112–115 contacts substrate; that stretch reads GADR. Catalysis depends on D114, which acts as the Proton acceptor. Residue D134 participates in K(+) binding. T137 contributes to the ATP binding site. Residue T189 participates in substrate binding.

Belongs to the type III pantothenate kinase family. In terms of assembly, homodimer. It depends on NH4(+) as a cofactor. K(+) serves as cofactor.

It is found in the cytoplasm. It carries out the reaction (R)-pantothenate + ATP = (R)-4'-phosphopantothenate + ADP + H(+). It participates in cofactor biosynthesis; coenzyme A biosynthesis; CoA from (R)-pantothenate: step 1/5. Catalyzes the phosphorylation of pantothenate (Pan), the first step in CoA biosynthesis. This chain is Type III pantothenate kinase, found in Saccharopolyspora erythraea (strain ATCC 11635 / DSM 40517 / JCM 4748 / NBRC 13426 / NCIMB 8594 / NRRL 2338).